Reading from the N-terminus, the 316-residue chain is Aspartate carbamoyltransferase catalytic subunit (316 aa).

Positions 66 and 67 each coordinate carbamoyl phosphate. Lys94 lines the L-aspartate pocket. Arg116, His146, and Gln149 together coordinate carbamoyl phosphate. L-aspartate contacts are provided by Arg180 and Arg235. Carbamoyl phosphate is bound by residues Gly276 and Pro277.

The protein belongs to the aspartate/ornithine carbamoyltransferase superfamily. ATCase family. As to quaternary structure, heterododecamer (2C3:3R2) of six catalytic PyrB chains organized as two trimers (C3), and six regulatory PyrI chains organized as three dimers (R2).

The enzyme catalyses carbamoyl phosphate + L-aspartate = N-carbamoyl-L-aspartate + phosphate + H(+). The protein operates within pyrimidine metabolism; UMP biosynthesis via de novo pathway; (S)-dihydroorotate from bicarbonate: step 2/3. Catalyzes the condensation of carbamoyl phosphate and aspartate to form carbamoyl aspartate and inorganic phosphate, the committed step in the de novo pyrimidine nucleotide biosynthesis pathway. The chain is Aspartate carbamoyltransferase catalytic subunit from Stenotrophomonas maltophilia (strain K279a).